Here is a 1394-residue protein sequence, read N- to C-terminus: Coiled-coil domain-containing protein 7 (1394 aa).

A coiled-coil region spans residues 308–340 (LLDAEYKQIQRDFELLSEEKLVLENELQKLKDT). Positions 345-375 (STNNRTKKAAKTVKKKDKGKSEDSEKKMSSE) are disordered. Residues 349–362 (RTKKAAKTVKKKDK) are compositionally biased toward basic residues. Positions 363 to 375 (GKSEDSEKKMSSE) are enriched in basic and acidic residues. The stretch at 383-421 (LDQVQKVARLEIENKVLQEQLKQALQEAEKAKHQLNYFL) forms a coiled coil. Disordered stretches follow at residues 431–617 (EGKT…EVPD), 634–806 (EQMK…LEHQ), and 819–842 (NEKL…PMLK). Residues 437–446 (TMRVGNSQTE) show a composition bias toward polar residues. Positions 447–462 (VKGEDSKTIPLEKETG) are enriched in basic and acidic residues. Residues 464–473 (SLVSDSGGQK) are compositionally biased toward polar residues. The span at 491-500 (LIEKSSEKKR) shows a compositional bias: basic and acidic residues. Polar residues-rich tracts occupy residues 503–513 (PAISDLSQILK), 521–538 (LESS…NKSP), and 546–571 (LTTV…NETV). Positions 583-600 (ESKKADVSEEQLQKKTEE) are enriched in basic and acidic residues. Residues 663–679 (SRSQSETKNLEATGNES) are compositionally biased toward polar residues. Residues 695-707 (QDTKSKTEVEVKK) are compositionally biased toward basic and acidic residues. The span at 711–721 (FQDNQLNTHNE) shows a compositional bias: polar residues. The span at 722–736 (VPNERLIVEHQESMS) shows a compositional bias: basic and acidic residues. Residues 780–790 (KEQSTLKGQRI) show a composition bias toward polar residues. Composition is skewed to basic and acidic residues over residues 791 to 806 (TTHE…LEHQ) and 830 to 842 (THGE…PMLK).

In terms of biological role, may play a role in tumorigenesis. The chain is Coiled-coil domain-containing protein 7 (CCDC7) from Macaca fascicularis (Crab-eating macaque).